Consider the following 697-residue polypeptide: Long-chain-fatty-acid--CoA ligase 6 (697 aa).

The helical; Signal-anchor for type III membrane protein transmembrane segment at 25 to 45 (LSATTLVSVGALAAVLAYWLT) threads the bilayer. Residues 46–697 (HRPKALQPPC…QIEELYLVSV (652 aa)) lie on the Cytoplasmic side of the membrane.

The protein belongs to the ATP-dependent AMP-binding enzyme family. Requires Mg(2+) as cofactor.

It is found in the mitochondrion outer membrane. It localises to the peroxisome membrane. Its subcellular location is the microsome membrane. The protein localises to the endoplasmic reticulum membrane. The catalysed reaction is a long-chain fatty acid + ATP + CoA = a long-chain fatty acyl-CoA + AMP + diphosphate. It catalyses the reaction (5Z,8Z,11Z,14Z)-eicosatetraenoate + ATP + CoA = (5Z,8Z,11Z,14Z)-eicosatetraenoyl-CoA + AMP + diphosphate. It carries out the reaction 15-hydroxy-(5Z,8Z,11Z,13E)-eicosatetraenoate + ATP + CoA = 15-hydroxy-(5Z,8Z,11Z,13E)-eicosatetraenoyl-CoA + AMP + diphosphate. The enzyme catalyses 12-hydroxy-(5Z,8Z,10E,14Z)-eicosatetraenoate + ATP + CoA = 12-hydroxy-(5Z,8Z,10E,14Z)-eicosatetraenoyl-CoA + AMP + diphosphate. The catalysed reaction is 5-hydroxy-(6E,8Z,11Z,14Z)-eicosatetraenoate + ATP + CoA = 5-hydroxy-(6E,8Z,11Z,14Z)-eicosatetraenoyl-CoA + AMP + diphosphate. It catalyses the reaction hexadecanoate + ATP + CoA = hexadecanoyl-CoA + AMP + diphosphate. It carries out the reaction (E)-hexadec-2-enoate + ATP + CoA = (2E)-hexadecenoyl-CoA + AMP + diphosphate. Functionally, catalyzes the conversion of long-chain fatty acids to their active form acyl-CoA for both synthesis of cellular lipids, and degradation via beta-oxidation. Plays an important role in fatty acid metabolism in brain and the acyl-CoAs produced may be utilized exclusively for the synthesis of the brain lipid. This is Long-chain-fatty-acid--CoA ligase 6 (Acsl6) from Mus musculus (Mouse).